An 88-amino-acid chain; its full sequence is Acyl-CoA-binding protein homolog (88 aa).

In terms of domain architecture, ACB spans 3 to 88; the sequence is PQADFDKAAG…AHELIEKYGL (86 aa). An acyl-CoA is bound by residues Lys-15, 30-34, Lys-52, Lys-56, and Tyr-75; that span reads YGLYK.

This sequence belongs to the ACBP family. As to expression, brain. Is selectively expressed in glial cells.

The protein resides in the endoplasmic reticulum. Its subcellular location is the golgi apparatus. Functionally, may play important functions in the control of brain and pituitary activities. May regulate GABA neurotransmission through a paracrine and/or autocrine mechanism. May not bind acyl-CoA esters. The sequence is that of Acyl-CoA-binding protein homolog from Pelophylax ridibundus (Marsh frog).